Here is a 904-residue protein sequence, read N- to C-terminus: DNA polymerase I (904 aa).

Positions 186 to 279 (TPRQYPDFAA…DTLRLQPWDR (94 aa)) constitute a 5'-3' exonuclease domain. Residues 317–493 (RGGALAPGTV…LADALDAELA (177 aa)) enclose the 3'-5' exonuclease domain.

This sequence belongs to the DNA polymerase type-A family. In terms of assembly, single-chain monomer with multiple functions.

The catalysed reaction is DNA(n) + a 2'-deoxyribonucleoside 5'-triphosphate = DNA(n+1) + diphosphate. Its function is as follows. In addition to polymerase activity, this DNA polymerase exhibits 3'-5' and 5'-3' exonuclease activity. The sequence is that of DNA polymerase I (polA) from Mycobacterium bovis (strain ATCC BAA-935 / AF2122/97).